The sequence spans 438 residues: UDP-N-acetyl-D-mannosamine dehydrogenase (438 aa).

NAD(+)-binding residues include Tyr21, Ile22, Asp41, Arg46, Thr93, and Thr131. Arg160, Val161, Lys212, Asn216, Arg219, His250, Arg252, and Gly263 together coordinate UDP-N-acetyl-alpha-D-mannosaminouronate. The Proton donor/acceptor role is filled by Lys212. Residue Cys266 is the Nucleophile of the active site. UDP-N-acetyl-alpha-D-mannosaminouronate is bound by residues Tyr323 and Lys324. Arg331 provides a ligand contact to NAD(+). Residue Lys409 coordinates UDP-N-acetyl-alpha-D-mannosaminouronate.

Belongs to the UDP-glucose/GDP-mannose dehydrogenase family. As to quaternary structure, homotetramer; probably dimer of dimers.

The enzyme catalyses UDP-N-acetyl-alpha-D-mannosamine + 2 NAD(+) + H2O = UDP-N-acetyl-alpha-D-mannosaminouronate + 2 NADH + 3 H(+). Functionally, catalyzes the four-electron oxidation of UDP-N-acetyl-D-mannosamine (UDP-ManNAc), reducing NAD(+) and releasing UDP-N-acetylmannosaminuronic acid (UDP-ManNAcA). The protein is UDP-N-acetyl-D-mannosamine dehydrogenase (wecC) of Methanococcus aeolicus (strain ATCC BAA-1280 / DSM 17508 / OCM 812 / Nankai-3).